The following is a 205-amino-acid chain: HTH-type transcriptional regulator LuxR (205 aa).

Residues 15-75 form the HTH tetR-type domain; that stretch reads LKRKQQLMEI…EVLNHVVRQF (61 aa). Positions 39 to 58 form a DNA-binding region, H-T-H motif; it reads HADIAEIAQVSVATVFNYFP.

Its function is as follows. Regulatory protein of bacterial bioluminescence. It probably binds the autoinducer molecule and potentiates the transcription of the bioluminescence operon. This is HTH-type transcriptional regulator LuxR (luxR) from Vibrio harveyi (Beneckea harveyi).